A 231-amino-acid polypeptide reads, in one-letter code: Elongation factor 1-delta 2 (231 aa).

Alanine 2 carries the N-acetylalanine modification. The GST C-terminal domain occupies 11 to 73 (SGLKKLDEHL…LRISGVSAEG (63 aa)). The disordered stretch occupies residues 82 to 136 (SPITEEAVATPPAADSKDTAAEEEDDDDVDLFGEETEEEKKAAEERAASVKASTK). Residues 102-118 (AEEEDDDDVDLFGEETE) show a composition bias toward acidic residues. Basic and acidic residues predominate over residues 119 to 129 (EEKKAAEERAA).

The protein belongs to the EF-1-beta/EF-1-delta family. EF-1 is composed of 4 subunits: alpha, beta (1B-alpha=beta'), delta (1B-beta), and gamma (1B-gamma).

EF-1-beta and EF-1-delta stimulate the exchange of GDP bound to EF-1-alpha to GTP. The polypeptide is Elongation factor 1-delta 2 (Arabidopsis thaliana (Mouse-ear cress)).